A 90-amino-acid polypeptide reads, in one-letter code: MSRTVFCTRLKKDAEGLDFQLYPGDLGKRIFDNISKEAWAEWQSKQTMLINEKKLNMMNVDHRKLLETEMVNFLFEGQDVIIEGYTPPSK.

The protein belongs to the Fe(2+)-trafficking protein family.

Functionally, could be a mediator in iron transactions between iron acquisition and iron-requiring processes, such as synthesis and/or repair of Fe-S clusters in biosynthetic enzymes. This chain is Probable Fe(2+)-trafficking protein, found in Photobacterium profundum (strain SS9).